The chain runs to 349 residues: 2-oxoglutarate and iron-dependent oxygenase domain-containing protein 2 (349 aa).

The Fe2OG dioxygenase domain occupies 214–308 (DSHRAFVVKY…RWNLVVWLRA (95 aa)). Positions 234, 236, and 289 each coordinate Fe cation. R299 contributes to the 2-oxoglutarate binding site.

This sequence belongs to the OGFOD2 family. Fe(2+) serves as cofactor. It depends on L-ascorbate as a cofactor.

This chain is 2-oxoglutarate and iron-dependent oxygenase domain-containing protein 2 (Ogfod2), found in Mus musculus (Mouse).